The chain runs to 185 residues: MIDKEKIKEGMKLILEAIGEDVNREGLIETPDRIARMYEEIFSGIGMNAKEHLSKTFEVHSNDLVLEKDITFYSMCEHHLVPFYGKVHIAYIPNGRVVGLSKLARCVEVYSKKPQLQERLTKEIADSIMEYLDAQGVMVVVEGEHMCMTMRGVRKPGAKTVTTTYRGKFLEDESLKNDVFRMISM.

Positions 76, 79, and 147 each coordinate Zn(2+).

It belongs to the GTP cyclohydrolase I family. Toroid-shaped homodecamer, composed of two pentamers of five dimers.

It catalyses the reaction GTP + H2O = 7,8-dihydroneopterin 3'-triphosphate + formate + H(+). Its pathway is cofactor biosynthesis; 7,8-dihydroneopterin triphosphate biosynthesis; 7,8-dihydroneopterin triphosphate from GTP: step 1/1. In Clostridium perfringens (strain 13 / Type A), this protein is GTP cyclohydrolase 1.